The following is a 145-amino-acid chain: Superoxide dismutase [Mn/Fe] (145 aa).

Positions 10 and 64 each coordinate Fe(3+). The Mn(2+) site is built by His10 and His64.

The protein belongs to the iron/manganese superoxide dismutase family. Requires Mn(2+) as cofactor. It depends on Fe(3+) as a cofactor.

It carries out the reaction 2 superoxide + 2 H(+) = H2O2 + O2. Its function is as follows. Destroys superoxide anion radicals which are normally produced within the cells and which are toxic to biological systems. Catalyzes the dismutation of superoxide anion radicals into O2 and H2O2 by successive reduction and oxidation of the transition metal ion at the active site. This is Superoxide dismutase [Mn/Fe] (sodA) from Streptococcus parasanguinis.